A 703-amino-acid polypeptide reads, in one-letter code: Cyclic AMP-dependent transcription factor ATF-6 beta (703 aa).

Ala-2 carries the post-translational modification N-acetylalanine. A transcription activation region spans residues 2–86 (AELMLLSEIA…ELLPIFPDLQ (85 aa)). Residues 2-396 (AELMLLSEIA…ELKLGSGNRK (395 aa)) lie on the Cytoplasmic side of the membrane. Disordered stretches follow at residues 87-114 (VKSE…PSSE), 229-248 (LDGS…QPKP), and 293-317 (EGPA…GNSC). Positions 89–114 (SEPSSPCSSSSLSSESSRLSTEPSSE) are enriched in low complexity. Positions 325–388 (LLKRQQRMIK…EALLAENSEL (64 aa)) constitute a bZIP domain. Residues 327 to 347 (KRQQRMIKNRESACQSRRKKK) are basic motif. The segment at 350–357 (LQGLEARL) is leucine-zipper. The helical; Signal-anchor for type II membrane protein transmembrane segment at 397 to 417 (VVCIMVFLLFIAFNFGPVSIS) threads the bilayer. The Lumenal portion of the chain corresponds to 418–703 (EPPSAPISPR…SHQPLYLNHP (286 aa)). The interval 447–479 (PVQGVEPLQGSSQGPKEPQPSPTDQPSFSNLTA) is disordered. Asn-476 and Asn-505 each carry an N-linked (GlcNAc...) asparagine glycan. Positions 521–565 (QRHQRGRRKIPQRAQERQKSQPRKKSPPVKAVPIQPPGPPERDSV) are disordered. Over residues 522 to 531 (RHQRGRRKIP) the composition is skewed to basic residues. 3 N-linked (GlcNAc...) asparagine glycosylation sites follow: Asn-610, Asn-627, and Asn-676. Residues 660 to 676 (STVPPSLRKQPSPTPGN) are compositionally biased toward polar residues. A disordered region spans residues 660–703 (STVPPSLRKQPSPTPGNATGGPLPVSAASQAHQASHQPLYLNHP). A compositionally biased stretch (low complexity) spans 685 to 696 (SAASQAHQASHQ).

Belongs to the bZIP family. ATF subfamily. Homodimer and heterodimer with ATF6-alpha. The dimer interacts with the nuclear transcription factor Y (NF-Y) trimer through direct binding to NF-Y subunit C (NF-YC). N-glycosylated. Post-translationally, during unfolded protein response, a fragment of approximately 60 kDa containing the cytoplasmic transcription factor domain is released by proteolysis. The cleavage is probably performed sequentially by site-1 (MBTPS1, S1P) and site-2 (MBTPS2, S2P) proteases. As to expression, ubiquitous.

The protein localises to the endoplasmic reticulum membrane. The protein resides in the nucleus. Functionally, precursor of the transcription factor form (Processed cyclic AMP-dependent transcription factor ATF-6 beta), which is embedded in the endoplasmic reticulum membrane. Endoplasmic reticulum stress promotes processing of this form, releasing the transcription factor form that translocates into the nucleus, where it activates transcription of genes involved in the unfolded protein response (UPR). Its function is as follows. Transcription factor that acts in the unfolded protein response (UPR) pathway by activating UPR target genes induced during ER stress. Binds DNA on the 5'-CCAC[GA]-3' half of the ER stress response element (ERSE) (5'-CCAATN(9)CCAC[GA]-3') when NF-Y is bound to ERSE. The sequence is that of Cyclic AMP-dependent transcription factor ATF-6 beta (ATF6B) from Homo sapiens (Human).